A 364-amino-acid chain; its full sequence is tRNA-specific 2-thiouridylase MnmA (364 aa).

Residues alanine 6–serine 13 and leucine 32 contribute to the ATP site. Catalysis depends on cysteine 101, which acts as the Nucleophile. Cysteine 101 and cysteine 193 are oxidised to a cystine. Glycine 125 serves as a coordination point for ATP. The tract at residues lysine 143–glutamine 145 is interaction with tRNA. The Cysteine persulfide intermediate role is filled by cysteine 193.

This sequence belongs to the MnmA/TRMU family.

It localises to the cytoplasm. It carries out the reaction S-sulfanyl-L-cysteinyl-[protein] + uridine(34) in tRNA + AH2 + ATP = 2-thiouridine(34) in tRNA + L-cysteinyl-[protein] + A + AMP + diphosphate + H(+). In terms of biological role, catalyzes the 2-thiolation of uridine at the wobble position (U34) of tRNA, leading to the formation of s(2)U34. The polypeptide is tRNA-specific 2-thiouridylase MnmA (Rhodococcus jostii (strain RHA1)).